Here is a 254-residue protein sequence, read N- to C-terminus: 5'-nucleotidase SurE (254 aa).

4 residues coordinate a divalent metal cation: D8, D9, S38, and N91.

It belongs to the SurE nucleotidase family. The cofactor is a divalent metal cation.

Its subcellular location is the cytoplasm. The catalysed reaction is a ribonucleoside 5'-phosphate + H2O = a ribonucleoside + phosphate. In terms of biological role, nucleotidase that shows phosphatase activity on nucleoside 5'-monophosphates. The chain is 5'-nucleotidase SurE from Anaeromyxobacter dehalogenans (strain 2CP-1 / ATCC BAA-258).